The sequence spans 164 residues: UPF0114 protein BCI_0033 (164 aa).

The next 3 membrane-spanning stretches (helical) occupy residues 15–35, 53–73, and 136–156; these read LLFP…LKFF, LILI…LVMV, and IMWC…MAYI.

The protein belongs to the UPF0114 family.

Its subcellular location is the cell membrane. The sequence is that of UPF0114 protein BCI_0033 from Baumannia cicadellinicola subsp. Homalodisca coagulata.